A 192-amino-acid chain; its full sequence is Ornithine lipid N-methyltransferase (192 aa).

Belongs to the methyltransferase superfamily.

It catalyses the reaction an N(2)-[(3R)-3-(2-saturated-acyloxy)acyl]-L-ornithine lipid + 3 S-adenosyl-L-methionine = an N,N,N-trimethylornithine lipid + 3 S-adenosyl-L-homocysteine + 3 H(+). In terms of biological role, catalyzes the 3-fold methylation of ornithine lipids. Forms ornithine lipids that are mono-, di-, and trimethylated on the delta-nitrogen of the ornithine head group. The protein is Ornithine lipid N-methyltransferase of Singulisphaera acidiphila (strain ATCC BAA-1392 / DSM 18658 / VKM B-2454 / MOB10).